Consider the following 783-residue polypeptide: Protein DWD HYPERSENSITIVE TO UV-B 1 (783 aa).

WD repeat units follow at residues 145 to 198 and 212 to 256; these read GEFT…LKLP and SDSS…DPSL. The short motif at 382–389 is the Nuclear localization signal element; that stretch reads RKKESVVR. WD repeat units lie at residues 439-480, 485-525, 538-577, 581-621, 625-664, and 666-710; these read DNSR…IFRY, GSQS…STVT, DEFD…RLQV, MHQE…SRPC, SSTK…LHLN, and EIVP…RRLR.

Interacts directly with DDB1A. Binds to COP1 and RUP1.

The protein resides in the nucleus. In terms of biological role, may act as a substrate receptor of a CUL4-RING E3 ubiquitin-protein ligase (CRL4) complex involved in the negative regulation of cellular responses to ultraviolet-B (UV-B) illumination, likely in coordination with RUP1. Interacts with COP1 and probably prevents the formation of active UVR8-COP1 complex, thus avoiding UVR8-COP1-mediated positive regulation of UV-B responses. This chain is Protein DWD HYPERSENSITIVE TO UV-B 1, found in Arabidopsis thaliana (Mouse-ear cress).